The following is a 208-amino-acid chain: Large ribosomal subunit protein uL3 (208 aa).

The interval 117–149 (FQGVIKRHGQSRGPMAHGSRYHRRPGSMGPVSP) is disordered.

This sequence belongs to the universal ribosomal protein uL3 family. In terms of assembly, part of the 50S ribosomal subunit. Forms a cluster with proteins L14 and L19.

In terms of biological role, one of the primary rRNA binding proteins, it binds directly near the 3'-end of the 23S rRNA, where it nucleates assembly of the 50S subunit. The chain is Large ribosomal subunit protein uL3 from Streptococcus equi subsp. equi (strain 4047).